The following is a 215-amino-acid chain: MWKWILTHCASAFPHLPGCCCCFLLLFLVSSVPVTCQALGQDMVSPEATNSSSSSSSSSSSSSFSSPSSAGRHVRSYNHLQGDVRWRKLFSFTKYFLKIEKNGKVSGTKKENCPYSILEITSVEIGVVAVKAINSNYYLAMNKKGKLYGSKEFNNDCKLKERIEENGYNTYASFNWQHNGRQMYVALNGKGAPRRGQKTRRKNTSAHFLPMVVHS.

A signal peptide spans 1–36; it reads MWKWILTHCASAFPHLPGCCCCFLLLFLVSSVPVTC. The segment at 49–73 is disordered; it reads TNSSSSSSSSSSSSSFSSPSSAGRH. N-linked (GlcNAc...) asparagine glycosylation is present at N50. Residues 51-69 are compositionally biased toward low complexity; it reads SSSSSSSSSSSSSFSSPSS. N203 is a glycosylation site (N-linked (GlcNAc...) asparagine).

Belongs to the heparin-binding growth factors family. In terms of assembly, interacts with FGFR1 and FGFR2. Interacts with FGFBP1. Preferentially expressed in the lung in adults.

The protein localises to the secreted. Plays an important role in the regulation of embryonic development, cell proliferation and cell differentiation. Required for normal branching morphogenesis. May play a role in wound healing. This is Fibroblast growth factor 10 (Fgf10) from Rattus norvegicus (Rat).